Here is a 667-residue protein sequence, read N- to C-terminus: Bifunctional polymyxin resistance protein ArnA (667 aa).

Residues 1-304 (MKAIVFAYHD…EMGIVTDVRL (304 aa)) form a formyltransferase ArnAFT region. His104 functions as the Proton donor; for formyltransferase activity in the catalytic mechanism. (6R)-10-formyltetrahydrofolate contacts are provided by residues Arg114 and 136–140 (VKKAD). The interval 314-667 (RRTRVLILGV…TAAPKDELNA (354 aa)) is dehydrogenase ArnADH. NAD(+) contacts are provided by residues Asp347 and 368–369 (DI). UDP-alpha-D-glucuronate contacts are provided by residues Ala393, Tyr398, and 432–433 (TS). The active-site Proton acceptor; for decarboxylase activity is Glu434. Residues Arg460, Asn492, 526 to 535 (KLVDGGAQKR), and Tyr613 each bind UDP-alpha-D-glucuronate. Catalysis depends on Arg619, which acts as the Proton donor; for decarboxylase activity.

In the N-terminal section; belongs to the Fmt family. UDP-L-Ara4N formyltransferase subfamily. It in the C-terminal section; belongs to the NAD(P)-dependent epimerase/dehydratase family. UDP-glucuronic acid decarboxylase subfamily. In terms of assembly, homohexamer, formed by a dimer of trimers.

The catalysed reaction is UDP-alpha-D-glucuronate + NAD(+) = UDP-beta-L-threo-pentopyranos-4-ulose + CO2 + NADH. It carries out the reaction UDP-4-amino-4-deoxy-beta-L-arabinose + (6R)-10-formyltetrahydrofolate = UDP-4-deoxy-4-formamido-beta-L-arabinose + (6S)-5,6,7,8-tetrahydrofolate + H(+). The protein operates within nucleotide-sugar biosynthesis; UDP-4-deoxy-4-formamido-beta-L-arabinose biosynthesis; UDP-4-deoxy-4-formamido-beta-L-arabinose from UDP-alpha-D-glucuronate: step 1/3. It participates in nucleotide-sugar biosynthesis; UDP-4-deoxy-4-formamido-beta-L-arabinose biosynthesis; UDP-4-deoxy-4-formamido-beta-L-arabinose from UDP-alpha-D-glucuronate: step 3/3. It functions in the pathway bacterial outer membrane biogenesis; lipopolysaccharide biosynthesis. In terms of biological role, bifunctional enzyme that catalyzes the oxidative decarboxylation of UDP-glucuronic acid (UDP-GlcUA) to UDP-4-keto-arabinose (UDP-Ara4O) and the addition of a formyl group to UDP-4-amino-4-deoxy-L-arabinose (UDP-L-Ara4N) to form UDP-L-4-formamido-arabinose (UDP-L-Ara4FN). The modified arabinose is attached to lipid A and is required for resistance to polymyxin and cationic antimicrobial peptides. The protein is Bifunctional polymyxin resistance protein ArnA of Yersinia pseudotuberculosis serotype O:3 (strain YPIII).